Here is a 470-residue protein sequence, read N- to C-terminus: Cannabinoid receptor type 1B (470 aa).

Residues 1 to 113 (MKLALHRIAG…CFMILTPAQQ (113 aa)) are Extracellular-facing. Asn78 and Asn86 each carry an N-linked (GlcNAc...) asparagine glycan. Residues 114 to 139 (LVIVILAITLGTFTVLENFVVLCVIL) form a helical membrane-spanning segment. Residues 140–151 (HSHTLRSRPSYH) are Cytoplasmic-facing. Residues 152-172 (FIGSLAVADLIGSIIFVYSFL) traverse the membrane as a helical segment. Residues 173-184 (DFHVLHRKDSPS) lie on the Extracellular side of the membrane. Residues 185-209 (IFLFKLAGVIASFTASVGSLFLTAI) form a helical membrane-spanning segment. Residues 210-229 (DRYVSIHRPMAYKRIITKTK) are Cytoplasmic-facing. Residues 230 to 252 (AVIAFSVMWAISIEFSLLPLLGW) form a helical membrane-spanning segment. Topologically, residues 253–270 (NCKRLHSVCSDIFPLIDE) are extracellular. Residues 271-296 (KYLMFWIGMTTVLLLFIIYAYMFILW) traverse the membrane as a helical segment. Residues 297–341 (KSHHHAVRMLSRSSQRSIIVYTSEGTKVQTVRPEQARMDLRLAKT) are Cytoplasmic-facing. A helical membrane pass occupies residues 342 to 362 (LVLILVALIICWGPLLAIMVY). The Extracellular portion of the chain corresponds to 363 to 374 (DLFGRVNDFIKT). The helical transmembrane segment at 375-396 (VFAFCSMLCLLNSTINPVIYAM) threads the bilayer. Residues 397-470 (RSKDLRRAFV…VTASSPAEAV (74 aa)) are Cytoplasmic-facing. Cys412 is lipidated: S-palmitoyl cysteine. Polar residues predominate over residues 418-434 (SLDSSAESDWNSRSVRS). Residues 418–450 (SLDSSAESDWNSRSVRSTGGRAGKDRSVGGKPQ) form a disordered region.

This sequence belongs to the G-protein coupled receptor 1 family. Palmitoylation at Cys-412 is important for recruitment at both plasma membrane and lipid rafts and association with G protein alpha subunits.

It is found in the cell membrane. The protein resides in the mitochondrion outer membrane. It localises to the cell projection. Its subcellular location is the axon. The protein localises to the presynapse. Functionally, G-protein coupled receptor for cannabinoids. Mediates many cannabinoid-induced effects in the central nervous system (CNS), as well as in peripheral tissues. Regulates cellular respiration and energy production in response to cannabinoids. Signaling typically involves reduction in cyclic AMP. In Takifugu rubripes (Japanese pufferfish), this protein is Cannabinoid receptor type 1B (cnr1b).